A 147-amino-acid polypeptide reads, in one-letter code: Myoglobin (147 aa).

The Globin domain occupies 2–141; the sequence is ADFDAVLKCW…VIADLEANYK (140 aa). His60 lines the nitrite pocket. Residue His60 coordinates O2. A heme b-binding site is contributed by His89.

The protein belongs to the globin family. Monomeric.

It localises to the cytoplasm. Its subcellular location is the sarcoplasm. The enzyme catalyses Fe(III)-heme b-[protein] + nitric oxide + H2O = Fe(II)-heme b-[protein] + nitrite + 2 H(+). The catalysed reaction is H2O2 + AH2 = A + 2 H2O. Functionally, monomeric heme protein which primary function is to store oxygen and facilitate its diffusion within muscle tissues. Reversibly binds oxygen through a pentacoordinated heme iron and enables its timely and efficient release as needed during periods of heightened demand. Depending on the oxidative conditions of tissues and cells, and in addition to its ability to bind oxygen, it also has a nitrite reductase activity whereby it regulates the production of bioactive nitric oxide. Under stress conditions, like hypoxia and anoxia, it also protects cells against reactive oxygen species thanks to its pseudoperoxidase activity. The sequence is that of Myoglobin (mb) from Auxis rochei (Bullet tuna).